A 1165-amino-acid polypeptide reads, in one-letter code: Integrin alpha-L (1165 aa).

A signal peptide spans 1–23; that stretch reads MNSCIIVLRLLLSGPFVFAPAWS. Residues 24–1084 are Extracellular-facing; it reads YNLDVRHVQN…MKVDLVYEKE (1061 aa). 2 FG-GAP repeats span residues 29–80 and 81–138; these read RHVQ…DCLP and VTLS…GPVL. N33 carries N-linked (GlcNAc...) asparagine glycosylation. C71 and C78 are joined by a disulfide. An N-linked (GlcNAc...) asparagine glycan is attached at N86. C108 and C126 form a disulfide bridge. One can recognise a VWFA domain in the interval 153 to 324; it reads DLVFLFDGSM…EKLKDLFTEL (172 aa). The N-linked (GlcNAc...) asparagine glycan is linked to N185. FG-GAP repeat units follow at residues 335 to 386, 387 to 442, 443 to 503, 504 to 560, and 564 to 624; these read SKQD…SSTF, VGNE…GGPW, SQIQ…EFQM, VSEL…GLSP, and QRIE…FSPA. Ca(2+) contacts are provided by D465, D467, D469, E473, D527, N529, D531, D535, D587, D591, and D595. 3 N-linked (GlcNAc...) asparagine glycosylation sites follow: N646, N667, and N723. The cysteines at positions 650 and 704 are disulfide-linked. 2 disulfides stabilise this stretch: C768–C774 and C842–C858. N-linked (GlcNAc...) asparagine glycans are attached at residues N859, N894, and N929. Disulfide bonds link C994–C1009 and C1017–C1048. 2 N-linked (GlcNAc...) asparagine glycosylation sites follow: N1056 and N1067. A helical transmembrane segment spans residues 1085 to 1105; sequence MLYLYVLSGIGGLLLLFLIFI. The Cytoplasmic portion of the chain corresponds to 1106 to 1165; sequence ALYKVGFFKRNLKEKMEANVDASSEIPGEDAGQPELEKECKDPGCLEPLQKTDEDGSGGD. Residues 1111-1115 carry the GFFKR motif motif; that stretch reads GFFKR. The disordered stretch occupies residues 1123 to 1165; it reads ANVDASSEIPGEDAGQPELEKECKDPGCLEPLQKTDEDGSGGD. The segment covering 1140–1159 has biased composition (basic and acidic residues); that stretch reads ELEKECKDPGCLEPLQKTDE.

The protein belongs to the integrin alpha chain family. As to quaternary structure, heterodimer of an alpha and a beta subunit. The ITGAL alpha subunit associates with the ITGB2 beta subunit. Interacts with THBD. Interacts with CD226. In terms of processing, in resting T-cells, up to 40% of surface ITGAL is constitutively phosphorylated. Phosphorylation causes conformational changes needed for ligand binding and is necessary for the activation by some physiological agents.

It localises to the cell membrane. In terms of biological role, integrin ITGAL/ITGB2 is a receptor for ICAM1, ICAM2, ICAM3 and ICAM4. Integrin ITGAL/ITGB2 is a receptor for F11R. Integrin ITGAL/ITGB2 is a receptor for the secreted form of ubiquitin-like protein ISG15; the interaction is mediated by ITGAL. Involved in a variety of immune phenomena including leukocyte-endothelial cell interaction, cytotoxic T-cell mediated killing, and antibody dependent killing by granulocytes and monocytes. Contributes to natural killer cell cytotoxicity. Involved in leukocyte adhesion and transmigration of leukocytes including T-cells and neutrophils. Acts as a platform at the immunological synapse to translate TCR engagement and density of the ITGAL ligand ICAM1 into graded adhesion. Required for generation of common lymphoid progenitor cells in bone marrow, indicating the role in lymphopoiesis. Integrin ITGAL/ITGB2 in association with ICAM3, contributes to apoptotic neutrophil phagocytosis by macrophages. This is Integrin alpha-L from Bos taurus (Bovine).